Consider the following 116-residue polypeptide: Large ribosomal subunit protein uL18 (116 aa).

Belongs to the universal ribosomal protein uL18 family. As to quaternary structure, part of the 50S ribosomal subunit; part of the 5S rRNA/L5/L18/L25 subcomplex. Contacts the 5S and 23S rRNAs.

This is one of the proteins that bind and probably mediate the attachment of the 5S RNA into the large ribosomal subunit, where it forms part of the central protuberance. In Cellvibrio japonicus (strain Ueda107) (Pseudomonas fluorescens subsp. cellulosa), this protein is Large ribosomal subunit protein uL18.